The primary structure comprises 1938 residues: Histone-lysine N-methyltransferase SETD1B (1938 aa).

Positions 1-20 (MSFKEAKPGERGKNPEDHGR) are enriched in basic and acidic residues. Residues 1–44 (MSFKEAKPGERGKNPEDHGRKQAASWMNGMEAANQPSTSAEKKS) form a disordered region. Positions 111–199 (DEFYVGPVPP…NIIHAELDTK (89 aa)) constitute an RRM domain. Disordered regions lie at residues 226-357 (LDAS…ENTF), 369-484 (FPRT…TRIA), 496-630 (LISS…EVTP), 652-688 (GFPP…VPPP), 916-1125 (KEPP…SSPV), 1147-1174 (HQTA…HKQD), 1187-1206 (MQQN…NEEE), 1327-1373 (KTLS…GNSL), 1413-1468 (FPES…VPHM), 1496-1528 (ECEF…PKKP), and 1744-1772 (DEPP…RRSE). Polar residues-rich tracts occupy residues 254–290 (VTPN…QGTP), 298–312 (PFSQ…QTTP), 375–407 (LSHS…PQTS), and 446–457 (DSTTEQKASFAQ). The span at 512 to 531 (SPISSSSSQLSPIPPYSSSS) shows a compositional bias: low complexity. Composition is skewed to polar residues over residues 532–546 (HYQD…SSTG) and 569–585 (SLCQ…QINQ). Over residues 588–599 (RKMETLDNKELV) the composition is skewed to basic and acidic residues. The segment covering 619–628 (EDMEISDDEV) has biased composition (acidic residues). 2 stretches are compositionally biased toward acidic residues: residues 976–990 (SEGE…DDGE) and 1054–1114 (DSSD…EDFF). Residues 1159 to 1174 (KDLDVPLVESKEHKQD) show a composition bias toward basic and acidic residues. The segment covering 1329 to 1343 (LSEEELPRTPGRDIL) has biased composition (basic and acidic residues). Composition is skewed to polar residues over residues 1349–1358 (LGKSQSTETI) and 1441–1453 (EPTS…NSVP). The span at 1454–1464 (SPIPFASPPRG) shows a compositional bias: pro residues. A compositionally biased stretch (polar residues) spans 1751-1765 (QGKSIPAQPQASTRA). The short motif at 1770-1775 (RSEQRR) is the RxxxRR motif element. The SET domain maps to 1799 to 1916 (KKIRFCKSHI…VNEEITYDYK (118 aa)). An S-adenosyl-L-methionine-binding site is contributed by Tyr-1915. A Post-SET domain is found at 1922 to 1938 (VKIPCLCGAENCRGTLN).

Belongs to the class V-like SAM-binding methyltransferase superfamily. In terms of assembly, component of the SET1B/COMPASS complex.

Its subcellular location is the nucleus speckle. It is found in the chromosome. It carries out the reaction L-lysyl(4)-[histone H3] + 3 S-adenosyl-L-methionine = N(6),N(6),N(6)-trimethyl-L-lysyl(4)-[histone H3] + 3 S-adenosyl-L-homocysteine + 3 H(+). Histone methyltransferase that specifically methylates 'Lys-4' of histone H3, when part of the SET1 histone methyltransferase (HMT) complex, but not if the neighboring 'Lys-9' residue is already methylated. H3 'Lys-4' methylation represents a specific tag for epigenetic transcriptional activation. The sequence is that of Histone-lysine N-methyltransferase SETD1B (setd1b) from Xenopus laevis (African clawed frog).